The following is a 118-amino-acid chain: UPF0344 protein RBAM_010920 (118 aa).

4 helical membrane-spanning segments follow: residues 4-24 (WHITSWVVALILVFVSYGLYG), 33-53 (ITHMILRLFYIIIILTGAELF), 62-82 (EYAGKMLLGIITIGLMEMLVI), and 93-113 (LWIGFIIVLVLTVLLGLHLPI).

This sequence belongs to the UPF0344 family.

Its subcellular location is the cell membrane. In Bacillus velezensis (strain DSM 23117 / BGSC 10A6 / LMG 26770 / FZB42) (Bacillus amyloliquefaciens subsp. plantarum), this protein is UPF0344 protein RBAM_010920.